The following is a 146-amino-acid chain: Small ribosomal subunit protein uS15 (146 aa).

This sequence belongs to the universal ribosomal protein uS15 family. In terms of assembly, part of the 30S ribosomal subunit.

The sequence is that of Small ribosomal subunit protein uS15 from Picrophilus torridus (strain ATCC 700027 / DSM 9790 / JCM 10055 / NBRC 100828 / KAW 2/3).